A 548-amino-acid chain; its full sequence is Chaperonin GroEL (548 aa).

Residues 30 to 33 (TLGP), K51, 87 to 91 (DGTTT), G415, 479 to 481 (NAA), and D495 contribute to the ATP site.

The protein belongs to the chaperonin (HSP60) family. In terms of assembly, forms a cylinder of 14 subunits composed of two heptameric rings stacked back-to-back. Interacts with the co-chaperonin GroES.

Its subcellular location is the cytoplasm. The catalysed reaction is ATP + H2O + a folded polypeptide = ADP + phosphate + an unfolded polypeptide.. Together with its co-chaperonin GroES, plays an essential role in assisting protein folding. The GroEL-GroES system forms a nano-cage that allows encapsulation of the non-native substrate proteins and provides a physical environment optimized to promote and accelerate protein folding. The chain is Chaperonin GroEL from Salmonella arizonae (strain ATCC BAA-731 / CDC346-86 / RSK2980).